The primary structure comprises 281 residues: MATYKLCSVLALSLTLFLLILNKVNSVETISFSFSEFEPGNDNLTLQGAALITQSGVLQLTKINQNGMPAWDSTGRTLYAKPVHIWDMTTGTVASFETRFSFSIEQPYTRPLPADGLVFFMGPTKSKPAQGYGYLGIFNNSKQDNSYQTLGVEFDTFSNPWDPPQVPHIGIDVNSIRSIKTQPFQLDNGQVANVVIKYDASSKILHAVLVYPSSGAIYTIAEIVDVKQVLPEWVDVGLSGATGAQRDAAETHDVYSWSFQASLPETNDAVIPTSNHNTFAI.

An N-terminal signal peptide occupies residues 1–26 (MATYKLCSVLALSLTLFLLILNKVNS). Asn43 and Asn139 each carry an N-linked (GlcNAc...) asparagine glycan. Residues 269–281 (AVIPTSNHNTFAI) constitute a propeptide that is removed on maturation.

It belongs to the leguminous lectin family. In terms of assembly, homodimer. Post-translationally, a minor C-terminal proteolytic processing site is observed at position 268.

Galactose and N-acetyllactosamine specific lectin. Binds to the H-2 blood type determinant fucosyl-N-acetyllactosamine. This Erythrina corallodendron (Coral tree) protein is Lectin.